A 249-amino-acid polypeptide reads, in one-letter code: Acidic leucine-rich nuclear phosphoprotein 32 family member A (249 aa).

Threonine 15 is subject to Phosphothreonine. Serine 17 is modified (phosphoserine). LRR repeat units lie at residues 18–41 (DVKE…TDEF), 43–64 (ELEF…PKLN), 65–87 (KLKK…AEKC), and 89–110 (NLTH…EPLK). An LRRCT domain is found at 123-161 (CEVTNLNDYRENVFKLLPQLTYLDGYDRDDKEAPDSDAE). A compositionally biased stretch (basic and acidic residues) spans 147-156 (GYDRDDKEAP). The segment at 147 to 249 (GYDRDDKEAP…EPXDXGEDDD (103 aa)) is disordered. Positions 150 to 174 (RDDKEAPDSDAEGYVEGLDDDEEDE) are necessary for tumor-suppressive function. The span at 157 to 230 (DSDAEGYVEG…DEEDEEDVGE (74 aa)) shows a compositional bias: acidic residues. Phosphoserine occurs at positions 158 and 204. An interaction with E4F1 region spans residues 165–249 (EGLDDDEEDE…EPXDXGEDDD (85 aa)).

Belongs to the ANP32 family. As to quaternary structure, component of the SET complex, composed of at least ANP32A, APEX1, HMGB2, NME1, SET and TREX1. Directly interacts with SET. Interacts with ATXN1/SCA1. Interacts with MAP1B. Interacts with ELAVL1. Part of the INHAT (inhibitor of histone acetyltransferases) complex. Interacts with E4F1. Phosphorylated on serine residues, at least in part by casein kinase 2/CK2. In terms of processing, some glutamate residues are glycylated by TTLL8. This modification occurs exclusively on glutamate residues and results in a glycine chain on the gamma-carboxyl group.

The protein resides in the nucleus. Its subcellular location is the cytoplasm. The protein localises to the endoplasmic reticulum. Its function is as follows. Multifunctional protein that is involved in the regulation of many processes including tumor suppression, apoptosis, cell cycle progression or transcription. Promotes apoptosis by favouring the activation of caspase-9/CASP9 and allowing apoptosome formation. In addition, plays a role in the modulation of histone acetylation and transcription as part of the INHAT (inhibitor of histone acetyltransferases) complex. Inhibits the histone-acetyltranferase activity of EP300/CREBBP (CREB-binding protein) and EP300/CREBBP-associated factor by histone masking. Preferentially binds to unmodified histone H3 and sterically inhibiting its acetylation and phosphorylation leading to cell growth inhibition. Participates in other biochemical processes such as regulation of mRNA nuclear-to-cytoplasmic translocation and stability by its association with ELAVL1 (Hu-antigen R). Plays a role in E4F1-mediated transcriptional repression as well as inhibition of protein phosphatase 2A. The sequence is that of Acidic leucine-rich nuclear phosphoprotein 32 family member A (ANP32A) from Canis lupus familiaris (Dog).